Here is a 336-residue protein sequence, read N- to C-terminus: F420-dependent glucose-6-phosphate dehydrogenase (336 aa).

Coenzyme F420-(gamma-Glu)n is bound at residue D39. Catalysis depends on H40, which acts as the Proton donor. Coenzyme F420-(gamma-Glu)n contacts are provided by residues T76 and 107–108 (TG). E109 functions as the Proton acceptor in the catalytic mechanism. Residues N112, 177 to 178 (GG), and 180 to 181 (AV) each bind coenzyme F420-(gamma-Glu)n. 4 residues coordinate substrate: T195, K198, K259, and R283.

This sequence belongs to the F420-dependent glucose-6-phosphate dehydrogenase family. As to quaternary structure, homodimer.

It carries out the reaction oxidized coenzyme F420-(gamma-L-Glu)(n) + D-glucose 6-phosphate + H(+) = 6-phospho-D-glucono-1,5-lactone + reduced coenzyme F420-(gamma-L-Glu)(n). Its function is as follows. Catalyzes the coenzyme F420-dependent oxidation of glucose 6-phosphate (G6P) to 6-phosphogluconolactone. Appears to have a role in resistance to oxidative stress, via its consumption of G6P that serves as a source of reducing power to combat oxidative stress in mycobacteria. More precisely, is likely involved in a F420-dependent anti-oxidant mechanism that protects M.tuberculosis against oxidative stress and bactericidal agents. In terms of biological role, is essential for the bioreductive activation of the bicyclic 4-nitroimidazole prodrug PA-824 (nitroimidazo-oxazine) developed for anti-tuberculosis therapy against both replicating and persistent bacteria. It does not interact directly with PA-824 but, rather, provides reduced F420 to the deazaflavin-dependent nitroreductase Ddn, which in turn activates PA-824. The protein is F420-dependent glucose-6-phosphate dehydrogenase (fgd1) of Mycobacterium tuberculosis (strain CDC 1551 / Oshkosh).